The primary structure comprises 315 residues: Ribosomal RNA small subunit methyltransferase H (315 aa).

The segment at 1–21 (MNVVNVVPMHLPPPPPRPRGE) is disordered. S-adenosyl-L-methionine contacts are provided by residues 51 to 53 (GGH), Asp69, Phe96, Asp117, and Gln124. The tract at residues 281–315 (KKPVTAGDDEVEGNPRARSAKLRAARRVGGAEALA) is disordered.

It belongs to the methyltransferase superfamily. RsmH family.

It is found in the cytoplasm. The enzyme catalyses cytidine(1402) in 16S rRNA + S-adenosyl-L-methionine = N(4)-methylcytidine(1402) in 16S rRNA + S-adenosyl-L-homocysteine + H(+). Functionally, specifically methylates the N4 position of cytidine in position 1402 (C1402) of 16S rRNA. The chain is Ribosomal RNA small subunit methyltransferase H from Sorangium cellulosum (strain So ce56) (Polyangium cellulosum (strain So ce56)).